We begin with the raw amino-acid sequence, 310 residues long: AMMECR1-like protein (310 aa).

A disordered region spans residues 26–92 (LSGSGTHSHG…SGALSPLPRP (67 aa)). Polar residues-rich tracts occupy residues 28-66 (GSGTHSHGNQSTTVPGSSSGPLQNHQHVDNSSGRENVSD) and 74-84 (SPITRMNTASG). S74 is modified (phosphoserine). Residues 97 to 291 (NSTKNLVVTA…ISYAEYIASR (195 aa)) form the AMMECR1 domain.

The polypeptide is AMMECR1-like protein (Ammecr1l) (Mus musculus (Mouse)).